We begin with the raw amino-acid sequence, 295 residues long: 4-hydroxy-3-methylbut-2-enyl diphosphate reductase (295 aa).

Cysteine 12 provides a ligand contact to [4Fe-4S] cluster. 2 residues coordinate (2E)-4-hydroxy-3-methylbut-2-enyl diphosphate: histidine 43 and histidine 81. Dimethylallyl diphosphate-binding residues include histidine 43 and histidine 81. Positions 43 and 81 each coordinate isopentenyl diphosphate. Cysteine 103 is a [4Fe-4S] cluster binding site. (2E)-4-hydroxy-3-methylbut-2-enyl diphosphate is bound at residue histidine 131. Histidine 131 contributes to the dimethylallyl diphosphate binding site. Histidine 131 provides a ligand contact to isopentenyl diphosphate. Residue glutamate 133 is the Proton donor of the active site. (2E)-4-hydroxy-3-methylbut-2-enyl diphosphate is bound at residue threonine 171. Cysteine 199 provides a ligand contact to [4Fe-4S] cluster. (2E)-4-hydroxy-3-methylbut-2-enyl diphosphate contacts are provided by serine 227, asparagine 229, and serine 272. Residues serine 227, asparagine 229, and serine 272 each contribute to the dimethylallyl diphosphate site. Residues serine 227, asparagine 229, and serine 272 each coordinate isopentenyl diphosphate.

This sequence belongs to the IspH family. It depends on [4Fe-4S] cluster as a cofactor.

It catalyses the reaction isopentenyl diphosphate + 2 oxidized [2Fe-2S]-[ferredoxin] + H2O = (2E)-4-hydroxy-3-methylbut-2-enyl diphosphate + 2 reduced [2Fe-2S]-[ferredoxin] + 2 H(+). It carries out the reaction dimethylallyl diphosphate + 2 oxidized [2Fe-2S]-[ferredoxin] + H2O = (2E)-4-hydroxy-3-methylbut-2-enyl diphosphate + 2 reduced [2Fe-2S]-[ferredoxin] + 2 H(+). The protein operates within isoprenoid biosynthesis; dimethylallyl diphosphate biosynthesis; dimethylallyl diphosphate from (2E)-4-hydroxy-3-methylbutenyl diphosphate: step 1/1. It participates in isoprenoid biosynthesis; isopentenyl diphosphate biosynthesis via DXP pathway; isopentenyl diphosphate from 1-deoxy-D-xylulose 5-phosphate: step 6/6. In terms of biological role, catalyzes the conversion of 1-hydroxy-2-methyl-2-(E)-butenyl 4-diphosphate (HMBPP) into a mixture of isopentenyl diphosphate (IPP) and dimethylallyl diphosphate (DMAPP). Acts in the terminal step of the DOXP/MEP pathway for isoprenoid precursor biosynthesis. The polypeptide is 4-hydroxy-3-methylbut-2-enyl diphosphate reductase (Symbiobacterium thermophilum (strain DSM 24528 / JCM 14929 / IAM 14863 / T)).